A 37-amino-acid polypeptide reads, in one-letter code: MKVRASVKKICDKCKIIKRKGVVRVICDTPKHSQRQG.

This sequence belongs to the bacterial ribosomal protein bL36 family.

This chain is Large ribosomal subunit protein bL36, found in Trichlorobacter lovleyi (strain ATCC BAA-1151 / DSM 17278 / SZ) (Geobacter lovleyi).